We begin with the raw amino-acid sequence, 331 residues long: tRNA U34 carboxymethyltransferase (331 aa).

Residues Lys91, Trp105, Lys110, Gly130, 152–154 (DPS), 181–182 (IE), Met196, Tyr200, and Arg315 contribute to the carboxy-S-adenosyl-L-methionine site.

This sequence belongs to the class I-like SAM-binding methyltransferase superfamily. CmoB family. In terms of assembly, homotetramer.

The catalysed reaction is carboxy-S-adenosyl-L-methionine + 5-hydroxyuridine(34) in tRNA = 5-carboxymethoxyuridine(34) in tRNA + S-adenosyl-L-homocysteine + H(+). Its function is as follows. Catalyzes carboxymethyl transfer from carboxy-S-adenosyl-L-methionine (Cx-SAM) to 5-hydroxyuridine (ho5U) to form 5-carboxymethoxyuridine (cmo5U) at position 34 in tRNAs. This is tRNA U34 carboxymethyltransferase from Shewanella baltica (strain OS155 / ATCC BAA-1091).